A 520-amino-acid polypeptide reads, in one-letter code: 2-isopropylmalate synthase (520 aa).

In terms of domain architecture, Pyruvate carboxyltransferase spans 5–268; sequence VYIFDTTLRD…YTDVNTKEIY (264 aa). Asp14, His202, His204, and Asn238 together coordinate Mn(2+). The tract at residues 394–520 is regulatory domain; that stretch reads KVLHFQVQSG…RQEIREEGTV (127 aa).

It belongs to the alpha-IPM synthase/homocitrate synthase family. LeuA type 1 subfamily. Homodimer. Mn(2+) is required as a cofactor.

It is found in the cytoplasm. The enzyme catalyses 3-methyl-2-oxobutanoate + acetyl-CoA + H2O = (2S)-2-isopropylmalate + CoA + H(+). Its pathway is amino-acid biosynthesis; L-leucine biosynthesis; L-leucine from 3-methyl-2-oxobutanoate: step 1/4. In terms of biological role, catalyzes the condensation of the acetyl group of acetyl-CoA with 3-methyl-2-oxobutanoate (2-ketoisovalerate) to form 3-carboxy-3-hydroxy-4-methylpentanoate (2-isopropylmalate). The polypeptide is 2-isopropylmalate synthase (Aquifex aeolicus (strain VF5)).